A 188-amino-acid chain; its full sequence is NADH-quinone oxidoreductase subunit B 1 (188 aa).

Residues C39, C40, C105, and C134 each coordinate [4Fe-4S] cluster.

It belongs to the complex I 20 kDa subunit family. NDH-1 is composed of 14 different subunits. Subunits NuoB, C, D, E, F, and G constitute the peripheral sector of the complex. The cofactor is [4Fe-4S] cluster.

It is found in the cell inner membrane. It carries out the reaction a quinone + NADH + 5 H(+)(in) = a quinol + NAD(+) + 4 H(+)(out). Its function is as follows. NDH-1 shuttles electrons from NADH, via FMN and iron-sulfur (Fe-S) centers, to quinones in the respiratory chain. The immediate electron acceptor for the enzyme in this species is believed to be ubiquinone. Couples the redox reaction to proton translocation (for every two electrons transferred, four hydrogen ions are translocated across the cytoplasmic membrane), and thus conserves the redox energy in a proton gradient. In Solibacter usitatus (strain Ellin6076), this protein is NADH-quinone oxidoreductase subunit B 1.